A 565-amino-acid polypeptide reads, in one-letter code: Probable beta-glucosidase btgE (565 aa).

The first 18 residues, 1 to 18, serve as a signal peptide directing secretion; that stretch reads MRGAILATAAALAGTAMA. The segment at 246-304 is disordered; it reads TGQDEPTSAPAAPSTTAVPATTTAAPETTTAAPDTTTAVPSTSSAAPSSSSTAPASTGA. Positions 251-304 are enriched in low complexity; sequence PTSAPAAPSTTAVPATTTAAPETTTAAPDTTTAVPSTSSAAPSSSSTAPASTGA. The active-site Proton donor is the E405. The active-site Nucleophile is E501.

Belongs to the glycosyl hydrolase 17 family.

The protein localises to the secreted. Its subcellular location is the cell wall. The catalysed reaction is Hydrolysis of terminal, non-reducing beta-D-glucosyl residues with release of beta-D-glucose.. Its pathway is glycan metabolism; cellulose degradation. Its function is as follows. Beta-glucosidases are one of a number of cellulolytic enzymes involved in the degradation of cellulosic biomass. Catalyzes the last step releasing glucose from the inhibitory cellobiose. This chain is Probable beta-glucosidase btgE (btgE), found in Aspergillus fumigatus (strain CBS 144.89 / FGSC A1163 / CEA10) (Neosartorya fumigata).